A 491-amino-acid polypeptide reads, in one-letter code: Probable cysteine proteinase 024R (491 aa).

Catalysis depends on residues Cys132, His325, and Asn355. A helical transmembrane segment spans residues 467-487 (ALDLALLVLPALLIVIVVLIG).

The protein belongs to the peptidase C1 family.

The protein resides in the membrane. Its function is as follows. Probable cysteine protease. In Invertebrate iridescent virus 3 (IIV-3), this protein is Probable cysteine proteinase 024R.